The chain runs to 138 residues: Probable lactoylglutathione lyase (138 aa).

The 125-residue stretch at 5–129 (RILHTMLRVG…DGYMIELIQN (125 aa)) folds into the VOC domain. His-8 is a Ni(2+) binding site. Arg-12 contributes to the substrate binding site. Glu-59 serves as a coordination point for Ni(2+). 2 residues coordinate substrate: Asn-63 and His-77. Residues His-77 and Glu-125 each contribute to the Ni(2+) site. Glu-125 (proton donor/acceptor) is an active-site residue.

This sequence belongs to the glyoxalase I family. Ni(2+) is required as a cofactor.

It carries out the reaction (R)-S-lactoylglutathione = methylglyoxal + glutathione. It participates in secondary metabolite metabolism; methylglyoxal degradation; (R)-lactate from methylglyoxal: step 1/2. Catalyzes the conversion of hemimercaptal, formed from methylglyoxal and glutathione, to S-lactoylglutathione. The sequence is that of Probable lactoylglutathione lyase (gloA) from Vibrio cholerae serotype O1 (strain ATCC 39315 / El Tor Inaba N16961).